The chain runs to 1025 residues: Beta-galactosidase (1025 aa).

The active-site Proton donor is Glu-482. Glu-551 acts as the Nucleophile in catalysis.

This sequence belongs to the glycosyl hydrolase 2 family.

It catalyses the reaction Hydrolysis of terminal non-reducing beta-D-galactose residues in beta-D-galactosides.. This is Beta-galactosidase (LAC4) from Kluyveromyces lactis (strain ATCC 8585 / CBS 2359 / DSM 70799 / NBRC 1267 / NRRL Y-1140 / WM37) (Yeast).